Reading from the N-terminus, the 234-residue chain is Carboxy-S-adenosyl-L-methionine synthase (234 aa).

S-adenosyl-L-methionine contacts are provided by residues Tyr35, Gly60 to Ser62, Asp109 to Ile110, Asn124, and Arg191.

It belongs to the class I-like SAM-binding methyltransferase superfamily. Cx-SAM synthase family. As to quaternary structure, homodimer.

It carries out the reaction prephenate + S-adenosyl-L-methionine = carboxy-S-adenosyl-L-methionine + 3-phenylpyruvate + H2O. Its function is as follows. Catalyzes the conversion of S-adenosyl-L-methionine (SAM) to carboxy-S-adenosyl-L-methionine (Cx-SAM). This Campylobacter fetus subsp. fetus (strain 82-40) protein is Carboxy-S-adenosyl-L-methionine synthase.